Consider the following 270-residue polypeptide: dTDP-6-deoxy-L-talose 4-dehydrogenase (NAD(+)) (270 aa).

NAD(+)-binding positions include 11–12 (YI), 50–51 (DI), 72–76 (LAWQA), Asn87, Thr112, Tyr135, and Lys139. Thr112 and Tyr135 together coordinate substrate. Tyr135 functions as the Proton acceptor in the catalytic mechanism.

The protein belongs to the NAD(P)-dependent epimerase/dehydratase family.

The enzyme catalyses dTDP-6-deoxy-beta-L-talose + NAD(+) = dTDP-4-dehydro-beta-L-rhamnose + NADH + H(+). The protein operates within bacterial outer membrane biogenesis; LPS O-antigen biosynthesis. In terms of biological role, catalyzes the reduction of dTDP-6-deoxy-L-lyxo-4-hexulose to dTDP-6-deoxy-L-talose. The chain is dTDP-6-deoxy-L-talose 4-dehydrogenase (NAD(+)) (tll) from Aggregatibacter actinomycetemcomitans (Actinobacillus actinomycetemcomitans).